The chain runs to 125 residues: Basic leucine zipper transcriptional factor ATF-like (125 aa).

Residues 1–14 (MPHSSDSSDSSFSR) are compositionally biased toward low complexity. The disordered stretch occupies residues 1 to 59 (MPHSSDSSDSSFSRSPPPGKQDSSDDVRKVQRREKNRIAAQKSRQRQTQKADTLHLESE). In terms of domain architecture, bZIP spans 26-89 (DVRKVQRREK…KYFTSVLSSH (64 aa)). The tract at residues 28 to 50 (RKVQRREKNRIAAQKSRQRQTQK) is basic motif. The residue at position 43 (Ser43) is a Phosphoserine. The residue at position 48 (Thr48) is a Phosphothreonine. Positions 54 to 75 (LHLESEDLEKQNAALRKEIKQL) are leucine-zipper.

The protein belongs to the bZIP family. As to quaternary structure, heterodimer; mainly heterodimerizes with JUNB. The BATF-JUNB heterodimer interacts with IRF4 and IRF8. Interacts (via bZIP domain) with IRF4 and IRF8; the interaction is direct. Also forms heterodimers with JUN and JUND. Interacts with IFI35. In terms of processing, phosphorylated on serine and threonine residues and at least one tyrosine residue. Phosphorylation at Ser-43 inhibit DNA binding activity and transforms it as a negative regulator of AP-1 mediated transcription. Detected in postnatal and adult lymphoid tissues such as thymus, spleen and lymph nodes. In thymus most concentrated expression is found in the immediate cortical layer. Differentially expressed during T-cell development in thymus. Highly expressed in Th17, Th1 and Th2 cells and in activated B-cells.

It is found in the nucleus. The protein localises to the cytoplasm. Functionally, AP-1 family transcription factor that controls the differentiation of lineage-specific cells in the immune system: specifically mediates the differentiation of T-helper 17 cells (Th17), follicular T-helper cells (TfH), CD8(+) dendritic cells and class-switch recombination (CSR) in B-cells. Acts via the formation of a heterodimer with JUNB that recognizes and binds DNA sequence 5'-TGA[CG]TCA-3'. The BATF-JUNB heterodimer also forms a complex with IRF4 (or IRF8) in immune cells, leading to recognition of AICE sequence (5'-TGAnTCA/GAAA-3'), an immune-specific regulatory element, followed by cooperative binding of BATF and IRF4 (or IRF8) and activation of genes. Controls differentiation of T-helper cells producing interleukin-17 (Th17 cells) by binding to Th17-associated gene promoters: regulates expression of the transcription factor RORC itself and RORC target genes such as IL17 (IL17A or IL17B). Also involved in differentiation of follicular T-helper cells (TfH) by directing expression of BCL6 and MAF. In B-cells, involved in class-switch recombination (CSR) by controlling the expression of both AICDA and of germline transcripts of the intervening heavy-chain region and constant heavy-chain region (I(H)-C(H)). Following infection, can participate in CD8(+) dendritic cell differentiation via interaction with IRF4 and IRF8 to mediate cooperative gene activation. Regulates effector CD8(+) T-cell differentiation by regulating expression of SIRT1. Following DNA damage, part of a differentiation checkpoint that limits self-renewal of hematopoietic stem cells (HSCs): up-regulated by STAT3, leading to differentiation of HSCs, thereby restricting self-renewal of HSCs. The polypeptide is Basic leucine zipper transcriptional factor ATF-like (Batf) (Mus musculus (Mouse)).